A 1603-amino-acid chain; its full sequence is DNA polymerase theta (1603 aa).

The Helicase ATP-binding domain maps to 38–208 (EARQFEDQHL…WLDGAKVFEA (171 aa)). 51–58 (APTSAGKS) is an ATP binding site. The short motif at 149-152 (DEMH) is the DEAH box element. A Helicase C-terminal domain is found at 283-434 (TDSSLLEILK…GVLTRKRDAE (152 aa)).

This sequence belongs to the DNA polymerase type-A family.

It localises to the nucleus. The enzyme catalyses DNA(n) + a 2'-deoxyribonucleoside 5'-triphosphate = DNA(n+1) + diphosphate. DNA polymerase that promotes microhomology-mediated end-joining (MMEJ), an alternative non-homologous end-joining (NHEJ) machinery triggered in response to double-strand breaks in DNA. MMEJ is an error-prone repair pathway that produces deletions of sequences from the strand being repaired and promotes genomic rearrangements, such as telomere fusions. Required to prevent extensive loss of sequences near G-quadruplex (G4) DNA sites, which are prone to cause genome alterations, by generating deletions. The protein is DNA polymerase theta of Caenorhabditis elegans.